The sequence spans 297 residues: MIPLSIRVPASTANVGPGFDSVGIALSLYLHVVVKEESDKWQVIHSFEDSIPTDDKNLIVSTACKVCPSLSPHIIEVTSNIPLTRGLGSSASAIVAGIELANQLGNLNLTTDQKVQIATNFEGHPDNVAASILGGTVIGALDGKNVSVVRIESKELGVISLIPNEELNTEESRSVLPDVFPFHEAVKASAISNVLVAALCQKKWEVVGEMMERDHFHEPFRLELVPLLPSIRKCAKEFGAYGTALSGAGPSIFILTPYEKRQEIAEQLARVFTSMKVCELEIDHRGITVNKEEHIGL.

82 to 92 (PLTRGLGSSAS) is a binding site for ATP.

It belongs to the GHMP kinase family. Homoserine kinase subfamily.

The protein resides in the cytoplasm. It carries out the reaction L-homoserine + ATP = O-phospho-L-homoserine + ADP + H(+). Its pathway is amino-acid biosynthesis; L-threonine biosynthesis; L-threonine from L-aspartate: step 4/5. In terms of biological role, catalyzes the ATP-dependent phosphorylation of L-homoserine to L-homoserine phosphate. The sequence is that of Homoserine kinase from Bacillus cereus (strain AH187).